A 283-amino-acid polypeptide reads, in one-letter code: Bis(5'-nucleosyl)-tetraphosphatase, symmetrical (283 aa).

It belongs to the Ap4A hydrolase family.

The catalysed reaction is P(1),P(4)-bis(5'-adenosyl) tetraphosphate + H2O = 2 ADP + 2 H(+). In terms of biological role, hydrolyzes diadenosine 5',5'''-P1,P4-tetraphosphate to yield ADP. This chain is Bis(5'-nucleosyl)-tetraphosphatase, symmetrical, found in Pseudomonas paraeruginosa (strain DSM 24068 / PA7) (Pseudomonas aeruginosa (strain PA7)).